Reading from the N-terminus, the 301-residue chain is MESQEFLYVNRETGAVEKEPVCCSFAIKFFLETRLGRGVYSFLCKNSLFSRIVGRFQRLRMTRRFIRPFVEKYRICEDEALRPLCDFTSFNDFFIRKLKPEARPICGGSEICVTPADGAYLVFPSIKDVSLFSVKNQLFSLNSLLEDQQLASEYAEGSMAIARLAPFDYHRFHFPVEGIAGTPRLINGYLFSVHPLMLKRNLKVFAENKREITVIESKEFGKVVYIEIGALNVGSIHQTFAPGSYVGKGAEKGFFAFGGSTVVLLFEPQRIIFDADLVHHSAQGLETRCRMGQSLGKRFSS.

Catalysis depends on charge relay system; for autoendoproteolytic cleavage activity residues Asp-117, His-173, and Ser-260. The Schiff-base intermediate with substrate; via pyruvic acid; for decarboxylase activity role is filled by Ser-260. Pyruvic acid (Ser); by autocatalysis is present on Ser-260.

This sequence belongs to the phosphatidylserine decarboxylase family. PSD-B subfamily. Prokaryotic type II sub-subfamily. In terms of assembly, heterodimer of a large membrane-associated beta subunit and a small pyruvoyl-containing alpha subunit. Requires pyruvate as cofactor. In terms of processing, is synthesized initially as an inactive proenzyme. Formation of the active enzyme involves a self-maturation process in which the active site pyruvoyl group is generated from an internal serine residue via an autocatalytic post-translational modification. Two non-identical subunits are generated from the proenzyme in this reaction, and the pyruvate is formed at the N-terminus of the alpha chain, which is derived from the carboxyl end of the proenzyme. The autoendoproteolytic cleavage occurs by a canonical serine protease mechanism, in which the side chain hydroxyl group of the serine supplies its oxygen atom to form the C-terminus of the beta chain, while the remainder of the serine residue undergoes an oxidative deamination to produce ammonia and the pyruvoyl prosthetic group on the alpha chain. During this reaction, the Ser that is part of the protease active site of the proenzyme becomes the pyruvoyl prosthetic group, which constitutes an essential element of the active site of the mature decarboxylase.

Its subcellular location is the cell membrane. It catalyses the reaction a 1,2-diacyl-sn-glycero-3-phospho-L-serine + H(+) = a 1,2-diacyl-sn-glycero-3-phosphoethanolamine + CO2. It participates in phospholipid metabolism; phosphatidylethanolamine biosynthesis; phosphatidylethanolamine from CDP-diacylglycerol: step 2/2. Catalyzes the formation of phosphatidylethanolamine (PtdEtn) from phosphatidylserine (PtdSer). The protein is Phosphatidylserine decarboxylase proenzyme of Chlamydia muridarum (strain MoPn / Nigg).